Here is a 403-residue protein sequence, read N- to C-terminus: Cysteine desulfurase IscS (403 aa).

Pyridoxal 5'-phosphate is bound by residues 75–76 (AT), Asn-155, Gln-183, and 203–205 (SAH). N6-(pyridoxal phosphate)lysine is present on Lys-206. Residue Thr-243 participates in pyridoxal 5'-phosphate binding. The active-site Cysteine persulfide intermediate is Cys-328. Cys-328 serves as a coordination point for [2Fe-2S] cluster.

It belongs to the class-V pyridoxal-phosphate-dependent aminotransferase family. NifS/IscS subfamily. As to quaternary structure, homodimer. Forms a heterotetramer with IscU, interacts with other sulfur acceptors. Requires pyridoxal 5'-phosphate as cofactor.

The protein localises to the cytoplasm. The enzyme catalyses (sulfur carrier)-H + L-cysteine = (sulfur carrier)-SH + L-alanine. It functions in the pathway cofactor biosynthesis; iron-sulfur cluster biosynthesis. Functionally, master enzyme that delivers sulfur to a number of partners involved in Fe-S cluster assembly, tRNA modification or cofactor biosynthesis. Catalyzes the removal of elemental sulfur atoms from cysteine to produce alanine. Functions as a sulfur delivery protein for Fe-S cluster synthesis onto IscU, an Fe-S scaffold assembly protein, as well as other S acceptor proteins. This is Cysteine desulfurase IscS from Psychromonas ingrahamii (strain DSM 17664 / CCUG 51855 / 37).